The following is a 750-amino-acid chain: MIIRSPEPEVKILVDRDPVKTSFEEWARPGHFSRTIAKGPETTTWIWNLHADAHDFDSHTSDLEEISRKVFSAHFGQLSIIFLWLSGMYFHGARFSNYEAWLSDPTHIGPSAQVVWPIVGQEILNGDVGGGFRGIQITSGFFQIWRASGITSELQLYCTAIGALVFAGLMLFAGWFHYHKAAPKLAWFQDVESMLNHHLAGLLGLGSLSWAGHQVHVSLPINQFLDAGVDPKEIPLPHEFILNRDLLAQLYPSFAEGATPFFTLNWSKYAEFLTFRGGLDPVTGGLWLTDIAHHHLAIAILFLIAGHMYRTNWGIGHGLKDILEAHKGPFTGQGHKGLYEILTTSWHAQLSLNLAMLGSLTIVVAHHMYSMPPYPYLAIDYGTQLSLFTHHMWIGGFLIVGAAAHAAIFMVRDYDPTTRYNDLLDRVLRHRDAIISHLNWACIFLGFHSFGLYIHNDTMSALGRPQDMFSDTAIQLQPIFAQWVQNTHALAPGATAPGATTSTSLTWGGGDLIAVGGKVALLPIPLGTADFLVHHIHAFTIHVTVLILLKGVLFARSSRLIPDKANLGFRFPCDGPGRGGTCQVSAWDHVFLGLFWMYNAISVVIFHFSWKMQSDVWGSISDQGVVTHITGGNFAQSSITINGWLRDFLWAQASQVIQSYGSSLSAYGLFFLGAHFVWAFSLMFLFSGRGYWQELIESIVWAHNKLKVAPATQPRALSIVQGRAVGVTHYLLGGIATTWAFFLARIIAVG.

A run of 8 helical transmembrane segments spans residues 70 to 93 (VFSAHFGQLSIIFLWLSGMYFHGA), 156 to 179 (LYCTAIGALVFAGLMLFAGWFHYH), 195 to 219 (LNHHLAGLLGLGSLSWAGHQVHVSL), 291 to 309 (IAHHHLAIAILFLIAGHMY), 346 to 369 (WHAQLSLNLAMLGSLTIVVAHHMY), 385 to 411 (LSLFTHHMWIGGFLIVGAAAHAAIFMV), 433 to 455 (AIISHLNWACIFLGFHSFGLYIH), and 531 to 549 (FLVHHIHAFTIHVTVLILL). [4Fe-4S] cluster is bound by residues Cys573 and Cys582. Helical transmembrane passes span 589 to 610 (HVFLGLFWMYNAISVVIFHFSW) and 664 to 686 (LSAYGLFFLGAHFVWAFSLMFLF). Chlorophyll a' is bound at residue His675. Residues Met683 and Tyr691 each contribute to the chlorophyll a site. Residue Trp692 participates in phylloquinone binding. The helical transmembrane segment at 724-744 (AVGVTHYLLGGIATTWAFFLA) threads the bilayer.

The protein belongs to the PsaA/PsaB family. The PsaA/B heterodimer binds the P700 chlorophyll special pair and subsequent electron acceptors. PSI consists of a core antenna complex that captures photons, and an electron transfer chain that converts photonic excitation into a charge separation. The eukaryotic PSI reaction center is composed of at least 11 subunits. P700 is a chlorophyll a/chlorophyll a' dimer, A0 is one or more chlorophyll a, A1 is one or both phylloquinones and FX is a shared 4Fe-4S iron-sulfur center. is required as a cofactor.

Its subcellular location is the plastid. The protein localises to the chloroplast thylakoid membrane. The catalysed reaction is reduced [plastocyanin] + hnu + oxidized [2Fe-2S]-[ferredoxin] = oxidized [plastocyanin] + reduced [2Fe-2S]-[ferredoxin]. In terms of biological role, psaA and PsaB bind P700, the primary electron donor of photosystem I (PSI), as well as the electron acceptors A0, A1 and FX. PSI is a plastocyanin-ferredoxin oxidoreductase, converting photonic excitation into a charge separation, which transfers an electron from the donor P700 chlorophyll pair to the spectroscopically characterized acceptors A0, A1, FX, FA and FB in turn. Oxidized P700 is reduced on the lumenal side of the thylakoid membrane by plastocyanin. The protein is Photosystem I P700 chlorophyll a apoprotein A1 of Drimys granadensis.